Here is a 527-residue protein sequence, read N- to C-terminus: Glutamate--cysteine ligase (527 aa).

It belongs to the glutamate--cysteine ligase type 1 family. Type 1 subfamily.

The enzyme catalyses L-cysteine + L-glutamate + ATP = gamma-L-glutamyl-L-cysteine + ADP + phosphate + H(+). Its pathway is sulfur metabolism; glutathione biosynthesis; glutathione from L-cysteine and L-glutamate: step 1/2. The polypeptide is Glutamate--cysteine ligase (Pseudomonas aeruginosa (strain LESB58)).